Reading from the N-terminus, the 105-residue chain is Thiosulfate sulfurtransferase GlpE (105 aa).

One can recognise a Rhodanese domain in the interval Asp-16 to Glu-104. The active-site Cysteine persulfide intermediate is the Cys-64.

Belongs to the GlpE family.

It localises to the cytoplasm. The catalysed reaction is thiosulfate + hydrogen cyanide = thiocyanate + sulfite + 2 H(+). It carries out the reaction thiosulfate + [thioredoxin]-dithiol = [thioredoxin]-disulfide + hydrogen sulfide + sulfite + 2 H(+). In terms of biological role, transferase that catalyzes the transfer of sulfur from thiosulfate to thiophilic acceptors such as cyanide or dithiols. May function in a CysM-independent thiosulfate assimilation pathway by catalyzing the conversion of thiosulfate to sulfite, which can then be used for L-cysteine biosynthesis. The protein is Thiosulfate sulfurtransferase GlpE of Pseudoalteromonas translucida (strain TAC 125).